Consider the following 1398-residue polypeptide: DNA topoisomerase 2 (1398 aa).

Residues Asn69, Asn103, 131–133, and 144–151 contribute to the ATP site; these read SDN and GRNGFGAK. The disordered stretch occupies residues 260–317; the sequence is NSNDNKNNKGQNDNNNNNNNNNDENANQNNDNLDVSLSNEPADGTPTKNNNNNNNNND. Residues 267–291 are compositionally biased toward low complexity; it reads NKGQNDNNNNNNNNNDENANQNNDN. 411–413 is a binding site for ATP; it reads QTK. Residues 493–608 form the Toprim domain; the sequence is CTLILTEGDS…SLLKHKGFLS (116 aa). Positions 499, 577, and 579 each coordinate Mg(2+). The Topo IIA-type catalytic domain maps to 739–1191; it reads IPNIMDGWKP…TVETMWLKDI (453 aa). Catalysis depends on Tyr830, which acts as the O-(5'-phospho-DNA)-tyrosine intermediate. Positions 1012 to 1021 are interaction with DNA; the sequence is KLKSTLTTTN. 2 disordered regions span residues 1214–1250 and 1262–1361; these read KFKVARKQGPSSMKKKKKKKKLSSDEESEGGDTSDSS and NTNK…NSSI. The span at 1262–1276 shows a compositional bias: low complexity; sequence NTNKKTTTSSNNVNN. Polar residues-rich tracts occupy residues 1287–1300 and 1348–1357; these read LNSNELDNTLSVSK and DSTNDNNSEL.

This sequence belongs to the type II topoisomerase family. In terms of assembly, homodimer. Mg(2+) serves as cofactor. Requires Mn(2+) as cofactor. Ca(2+) is required as a cofactor.

It is found in the nucleus. It carries out the reaction ATP-dependent breakage, passage and rejoining of double-stranded DNA.. Its function is as follows. Control of topological states of DNA by transient breakage and subsequent rejoining of DNA strands. Topoisomerase II makes double-strand breaks. The sequence is that of DNA topoisomerase 2 (TOP2) from Plasmodium falciparum (isolate K1 / Thailand).